The sequence spans 88 residues: Small ribosomal subunit protein uS15c (88 aa).

Belongs to the universal ribosomal protein uS15 family. As to quaternary structure, part of the 30S ribosomal subunit.

It is found in the plastid. The protein resides in the chloroplast. This chain is Small ribosomal subunit protein uS15c (rps15), found in Aethionema cordifolium (Lebanon stonecress).